The chain runs to 365 residues: Chorismate synthase (365 aa).

An NADP(+)-binding site is contributed by Arg47. FMN is bound by residues 124 to 126 (RAS), Gly287, 302 to 306 (KPTAT), and Arg328.

Belongs to the chorismate synthase family. Homotetramer. The cofactor is FMNH2.

It catalyses the reaction 5-O-(1-carboxyvinyl)-3-phosphoshikimate = chorismate + phosphate. It functions in the pathway metabolic intermediate biosynthesis; chorismate biosynthesis; chorismate from D-erythrose 4-phosphate and phosphoenolpyruvate: step 7/7. In terms of biological role, catalyzes the anti-1,4-elimination of the C-3 phosphate and the C-6 proR hydrogen from 5-enolpyruvylshikimate-3-phosphate (EPSP) to yield chorismate, which is the branch point compound that serves as the starting substrate for the three terminal pathways of aromatic amino acid biosynthesis. This reaction introduces a second double bond into the aromatic ring system. This Prochlorococcus marinus (strain AS9601) protein is Chorismate synthase.